A 207-amino-acid chain; its full sequence is Thiamine-phosphate synthase (207 aa).

Residues 37 to 41 (QLREK) and N69 contribute to the 4-amino-2-methyl-5-(diphosphooxymethyl)pyrimidine site. Positions 70 and 89 each coordinate Mg(2+). Residue S108 coordinates 4-amino-2-methyl-5-(diphosphooxymethyl)pyrimidine. 134-136 (TGS) contacts 2-[(2R,5Z)-2-carboxy-4-methylthiazol-5(2H)-ylidene]ethyl phosphate. K137 contributes to the 4-amino-2-methyl-5-(diphosphooxymethyl)pyrimidine binding site. Residues G165 and 185 to 186 (IS) contribute to the 2-[(2R,5Z)-2-carboxy-4-methylthiazol-5(2H)-ylidene]ethyl phosphate site.

It belongs to the thiamine-phosphate synthase family. Requires Mg(2+) as cofactor.

It catalyses the reaction 2-[(2R,5Z)-2-carboxy-4-methylthiazol-5(2H)-ylidene]ethyl phosphate + 4-amino-2-methyl-5-(diphosphooxymethyl)pyrimidine + 2 H(+) = thiamine phosphate + CO2 + diphosphate. It carries out the reaction 2-(2-carboxy-4-methylthiazol-5-yl)ethyl phosphate + 4-amino-2-methyl-5-(diphosphooxymethyl)pyrimidine + 2 H(+) = thiamine phosphate + CO2 + diphosphate. The catalysed reaction is 4-methyl-5-(2-phosphooxyethyl)-thiazole + 4-amino-2-methyl-5-(diphosphooxymethyl)pyrimidine + H(+) = thiamine phosphate + diphosphate. It functions in the pathway cofactor biosynthesis; thiamine diphosphate biosynthesis; thiamine phosphate from 4-amino-2-methyl-5-diphosphomethylpyrimidine and 4-methyl-5-(2-phosphoethyl)-thiazole: step 1/1. Functionally, condenses 4-methyl-5-(beta-hydroxyethyl)thiazole monophosphate (THZ-P) and 2-methyl-4-amino-5-hydroxymethyl pyrimidine pyrophosphate (HMP-PP) to form thiamine monophosphate (TMP). This chain is Thiamine-phosphate synthase, found in Desulfitobacterium hafniense (strain DSM 10664 / DCB-2).